The following is a 142-amino-acid chain: Hemoglobin subunit alpha-A (142 aa).

In terms of domain architecture, Globin spans 2–142 (VLSAADKTNV…VGAVLTAKYR (141 aa)). Histidine 59 provides a ligand contact to O2. Histidine 88 is a binding site for heme b.

It belongs to the globin family. Heterotetramer of two alpha chains and two beta chains. In terms of tissue distribution, red blood cells.

Involved in oxygen transport from the lung to the various peripheral tissues. In Anas platyrhynchos (Mallard), this protein is Hemoglobin subunit alpha-A (HBAA).